A 382-amino-acid polypeptide reads, in one-letter code: Chaperone protein DnaJ (382 aa).

The J domain maps to 5–70 (DYYDLLGLSK…DKRAAYDRYG (66 aa)). A CR-type zinc finger spans residues 138 to 216 (GTKVPINYVT…CSGSGRVRDE (79 aa)). Residues cysteine 151, cysteine 154, cysteine 168, cysteine 171, cysteine 190, cysteine 193, cysteine 204, and cysteine 207 each coordinate Zn(2+). CXXCXGXG motif repeat units lie at residues 151 to 158 (CSSCSGSG), 168 to 175 (CNTCHGAG), 190 to 197 (CHVCNGEG), and 204 to 211 (CKKCSGSG).

It belongs to the DnaJ family. Homodimer. Zn(2+) is required as a cofactor.

The protein localises to the cytoplasm. Participates actively in the response to hyperosmotic and heat shock by preventing the aggregation of stress-denatured proteins and by disaggregating proteins, also in an autonomous, DnaK-independent fashion. Unfolded proteins bind initially to DnaJ; upon interaction with the DnaJ-bound protein, DnaK hydrolyzes its bound ATP, resulting in the formation of a stable complex. GrpE releases ADP from DnaK; ATP binding to DnaK triggers the release of the substrate protein, thus completing the reaction cycle. Several rounds of ATP-dependent interactions between DnaJ, DnaK and GrpE are required for fully efficient folding. Also involved, together with DnaK and GrpE, in the DNA replication of plasmids through activation of initiation proteins. The protein is Chaperone protein DnaJ of Ehrlichia ruminantium (strain Gardel).